A 181-amino-acid polypeptide reads, in one-letter code: GTPase RhebL1 (181 aa).

GTP-binding positions include 30-36, glycine 61, 117-120, and 147-148; these read LEDYDPT, NKAD, and SA. The Effector region signature appears at 33-41; that stretch reads YDPTVENTY. Threonine 36 is a Mg(2+) binding site. Cysteine 178 bears the Cysteine methyl ester mark. Cysteine 178 carries the S-farnesyl cysteine lipid modification. A propeptide spans 179 to 181 (removed in mature form); that stretch reads HLM.

It belongs to the small GTPase superfamily. Rheb family. In terms of assembly, interacts with MTOR.

The protein resides in the endomembrane system. The protein localises to the cytoplasm. It catalyses the reaction GTP + H2O = GDP + phosphate + H(+). Functionally, binds GTP and exhibits intrinsic GTPase activity. May activate NF-kappa-B-mediated gene transcription. Promotes signal transduction through MTOR, activates RPS6KB1, and is a downstream target of the small GTPase-activating proteins TSC1 and TSC2. The polypeptide is GTPase RhebL1 (RHEBL1) (Bos taurus (Bovine)).